The following is a 202-amino-acid chain: ATP-dependent dethiobiotin synthetase BioD (202 aa).

12–17 is a binding site for ATP; sequence GIGKTI. Residue Thr-16 participates in Mg(2+) binding. Residue Lys-32 is part of the active site. Ser-36 contacts substrate. Residues Asp-43, 94 to 97, and 178 to 180 each bind ATP; these read EGAG and PVV. Mg(2+)-binding residues include Asp-43 and Glu-94.

Belongs to the dethiobiotin synthetase family. Homodimer. The cofactor is Mg(2+).

The protein localises to the cytoplasm. The enzyme catalyses (7R,8S)-7,8-diammoniononanoate + CO2 + ATP = (4R,5S)-dethiobiotin + ADP + phosphate + 3 H(+). It functions in the pathway cofactor biosynthesis; biotin biosynthesis; biotin from 7,8-diaminononanoate: step 1/2. Its function is as follows. Catalyzes a mechanistically unusual reaction, the ATP-dependent insertion of CO2 between the N7 and N8 nitrogen atoms of 7,8-diaminopelargonic acid (DAPA, also called 7,8-diammoniononanoate) to form a ureido ring. The chain is ATP-dependent dethiobiotin synthetase BioD from Sphingopyxis alaskensis (strain DSM 13593 / LMG 18877 / RB2256) (Sphingomonas alaskensis).